Reading from the N-terminus, the 60-residue chain is Short neurotoxin 1 (60 aa).

4 disulfide bridges follow: cysteine 3-cysteine 22, cysteine 17-cysteine 39, cysteine 41-cysteine 52, and cysteine 53-cysteine 58.

It belongs to the three-finger toxin family. Short-chain subfamily. Type I alpha-neurotoxin sub-subfamily. In terms of tissue distribution, expressed by the venom gland.

It is found in the secreted. Its function is as follows. Binds to muscle nicotinic acetylcholine receptor (nAChR) and inhibit acetylcholine from binding to the receptor, thereby impairing neuromuscular transmission. The sequence is that of Short neurotoxin 1 from Dendroaspis jamesoni kaimosae (Eastern Jameson's mamba).